A 434-amino-acid chain; its full sequence is Elongation factor 1-alpha (434 aa).

The region spanning 5–232 is the tr-type G domain; that stretch reads KPHINLVVIG…DNVHPPKRPV (228 aa). The G1 stretch occupies residues 14–21; sequence GHVVAGKS. 14-21 contributes to the GTP binding site; the sequence is GHVVAGKS. Residues 70 to 74 are G2; the sequence is GITID. Positions 91–94 are G3; it reads DAPG. Residues 91 to 95 and 153 to 156 contribute to the GTP site; these read DAPGH and NKMD. A G4 region spans residues 153-156; sequence NKMD. A G5 region spans residues 196 to 198; that stretch reads SGF.

It belongs to the TRAFAC class translation factor GTPase superfamily. Classic translation factor GTPase family. EF-Tu/EF-1A subfamily.

Its subcellular location is the cytoplasm. In terms of biological role, this protein promotes the GTP-dependent binding of aminoacyl-tRNA to the A-site of ribosomes during protein biosynthesis. The protein is Elongation factor 1-alpha of Blastocystis hominis.